Consider the following 507-residue polypeptide: MEELQGYLEMDGFRQQYFLYPFLFQEYIYALAHGHALNGSILYEPVENLDHDNKSSSLIVKRLITRMHQQNRLIISVNDSNQNRFVGHNNHFDSQMISEGFAVVVEIPFSLRLVSSLEEKEIAKSHNLRSIHSIFPFFEDKLSHLNHVSDILIPHPIHLEILVQTLHSWIQDTPSLHLLRFSLYEYWNSNSLITPKNSISLFSKENQRFFLFLSNSHVYECEFIFIFLRKQPFHLRSKSFGSFLERTHFYAKIEYLVVVLCNDFQKTLWLFKDPFMHYVRYQGKSILASRGARLLIKKWKSHLVNFWQCHFDLWSQPARIHIKQLYNHPFYFLGYLSSVRLNSSVIRSQMLENSFRIDTAIKKFETVVPIIPLIGSLAKAKFCNVSGHPISKPFRADLSDSEILNRFGRICRNLSHYHSGSSKKQSLYRIKYILRLSCARTLSRKHKSTIRAFLKRLGSEFLEEFFTEEEQALSLIFPTTSSPSHRSHRERIWYLDIIRINDLVSHL.

Belongs to the intron maturase 2 family. MatK subfamily.

Its subcellular location is the plastid. It localises to the chloroplast. In terms of biological role, usually encoded in the trnK tRNA gene intron. Probably assists in splicing its own and other chloroplast group II introns. The sequence is that of Maturase K from Umbellularia californica (California bay laurel).